The primary structure comprises 840 residues: Sorting nexin-25 (840 aa).

The PXA domain occupies 1–164; that stretch reads MDRVLRDVFD…MLLRQLEYRE (164 aa). The region spanning 287-401 is the RGS domain; sequence QFEDIMTNPF…LVSDLYEKLM (115 aa). Positions 404–437 are disordered; it reads EEEEEPDAQLASEKDELGSGGEAGEEAVEGTSGV. A coiled-coil region spans residues 446–494; the sequence is IKLRELNEKLEYKRQALSSIQNAPKPDKKIISKLKDEILLIEKECTALQ. One can recognise a PX domain in the interval 508 to 628; the sequence is GLWRASITSA…AFLSPSPDYL (121 aa). Position 665 is a phosphoserine (Ser665).

This sequence belongs to the sorting nexin family.

The protein resides in the endosome membrane. Its function is as follows. May be involved in several stages of intracellular trafficking. This Mus musculus (Mouse) protein is Sorting nexin-25 (Snx25).